A 296-amino-acid chain; its full sequence is MIISEKVKKALEDGIPVIALESTVIAHGLPYPHNVETAKMLEEMALENGVVPATIGILKGEIIVGMSQEQINEMLADEPLKIGTREIPYAVGMKKSAATTVSATMRIAKIAGIDVFATGGIGGVHIGDWDVSQDITEMAKSDVIVVSAGCKSILDVKKTIEFLETFQVTVVGYKTNKFPIFYEGLSDFNLEHRVDSPEDIAKIFRAKKSLGIEGALLVANPIPQEFVISEQEVDGYMKQALSECFEKGITGKAVTPYLLSRIAQLSNGKTLTSNIELLKNNVLLACQIAKSLKTMA.

E21 serves as the catalytic Proton donor. Residues K81 and V101 each coordinate substrate. A Mn(2+)-binding site is contributed by D130. S132–D134 is a substrate binding site. K151 functions as the Nucleophile in the catalytic mechanism.

The protein belongs to the pseudouridine-5'-phosphate glycosidase family. Homotrimer. It depends on Mn(2+) as a cofactor.

The enzyme catalyses D-ribose 5-phosphate + uracil = psi-UMP + H2O. Functionally, catalyzes the reversible cleavage of pseudouridine 5'-phosphate (PsiMP) to ribose 5-phosphate and uracil. Functions biologically in the cleavage direction, as part of a pseudouridine degradation pathway. This is Pseudouridine-5'-phosphate glycosidase from Fervidobacterium nodosum (strain ATCC 35602 / DSM 5306 / Rt17-B1).